The primary structure comprises 205 residues: ATP-dependent Clp protease proteolytic subunit (205 aa).

The active-site Nucleophile is Ser-101. Residue His-126 is part of the active site.

This sequence belongs to the peptidase S14 family. As to quaternary structure, component of the chloroplastic Clp protease core complex.

The protein resides in the plastid. The protein localises to the chloroplast stroma. The catalysed reaction is Hydrolysis of proteins to small peptides in the presence of ATP and magnesium. alpha-casein is the usual test substrate. In the absence of ATP, only oligopeptides shorter than five residues are hydrolyzed (such as succinyl-Leu-Tyr-|-NHMec, and Leu-Tyr-Leu-|-Tyr-Trp, in which cleavage of the -Tyr-|-Leu- and -Tyr-|-Trp bonds also occurs).. Functionally, cleaves peptides in various proteins in a process that requires ATP hydrolysis. Has a chymotrypsin-like activity. Plays a major role in the degradation of misfolded proteins. This Pinus contorta (Shore pine) protein is ATP-dependent Clp protease proteolytic subunit.